Here is a 106-residue protein sequence, read N- to C-terminus: Iron-sulfur cluster assembly protein CyaY (106 aa).

Belongs to the frataxin family.

Functionally, involved in iron-sulfur (Fe-S) cluster assembly. May act as a regulator of Fe-S biogenesis. This is Iron-sulfur cluster assembly protein CyaY from Escherichia coli O127:H6 (strain E2348/69 / EPEC).